We begin with the raw amino-acid sequence, 371 residues long: MKILCEKEAFLKEISTAQEVISNKKNTSIFSNVLLAAQGALLTIRATDTKVTFETSIPVNVLAEGTTTVFCDKLVNVVSALPTKEIELTLCEEQLVITPPNKKISFQLRTLSHESFPCFPQNEGGVSLAVPTSDLRNMINHTVFAVSEDSTRHFINGVHVDFQYGNIICVSTDGKRLAYIEKKGESSPQSFSGVIVPTKILGIVNRKLTPEGSVTLCITSQHVYFFFGGYKFSSVLIEGQFPNYKRVIPDHQERSFCVGRVELMEALKRVSLLVEQKSHRIFITIQQGLLTLSSKAHTQENEIGDAQEEIACAYTGESEVIALNYLYLEEPLKVFTSKEVQVEFTDPAKALTLRAVPNTDCFHIIMPMQTE.

Belongs to the beta sliding clamp family. As to quaternary structure, forms a ring-shaped head-to-tail homodimer around DNA which binds and tethers DNA polymerases and other proteins to the DNA. The DNA replisome complex has a single clamp-loading complex (3 tau and 1 each of delta, delta', psi and chi subunits) which binds 3 Pol III cores (1 core on the leading strand and 2 on the lagging strand) each with a beta sliding clamp dimer. Additional proteins in the replisome are other copies of gamma, psi and chi, Ssb, DNA helicase and RNA primase.

It is found in the cytoplasm. Confers DNA tethering and processivity to DNA polymerases and other proteins. Acts as a clamp, forming a ring around DNA (a reaction catalyzed by the clamp-loading complex) which diffuses in an ATP-independent manner freely and bidirectionally along dsDNA. Initially characterized for its ability to contact the catalytic subunit of DNA polymerase III (Pol III), a complex, multichain enzyme responsible for most of the replicative synthesis in bacteria; Pol III exhibits 3'-5' exonuclease proofreading activity. The beta chain is required for initiation of replication as well as for processivity of DNA replication. This Treponema pallidum (strain Nichols) protein is Beta sliding clamp (dnaN).